The chain runs to 171 residues: Voltage-dependent P/Q-type calcium channel subunit alpha-1A (171 aa).

The helical transmembrane segment at 1 to 11 threads the bilayer; that stretch reads FVTVLGSITDI. One copy of the IV repeat lies at 1-171; the sequence is FVTVLGSITD…LMLNLFVAVI (171 aa). Residues 12–18 lie on the Extracellular side of the membrane; it reads LVTEFGN. A helical membrane pass occupies residues 19-37; sequence NFINLSFLRLFRAARLIKL. The Cytoplasmic portion of the chain corresponds to 38 to 56; the sequence is LRQGYTIRILLWTFVQSFK. Residues 57–76 form a helical membrane-spanning segment; the sequence is ALPYVCLLIAMLFFIYAIIG. Residues 77-143 lie on the Extracellular side of the membrane; the sequence is MQVFGNIGIE…ENSGIKEDEC (67 aa). Residues 144-168 form a helical membrane-spanning segment; it reads GNEFAYFYFVSFIFLCSFLMLNLFV. Residues 169-171 lie on the Cytoplasmic side of the membrane; it reads AVI.

It belongs to the calcium channel alpha-1 subunit (TC 1.A.1.11) family. CACNA1A subfamily. As to quaternary structure, voltage-dependent calcium channels are multisubunit complexes, consisting of alpha-1, alpha-2, beta and delta subunits in a 1:1:1:1 ratio. The channel activity is directed by the pore-forming and voltage-sensitive alpha-1 subunit. In many cases, this subunit is sufficient to generate voltage-sensitive calcium channel activity. The auxiliary subunits beta and alpha-2/delta linked by a disulfide bridge regulate the channel activity.

It is found in the cell membrane. It carries out the reaction Ca(2+)(in) = Ca(2+)(out). In terms of biological role, the isoform alpha-1A gives rise to P and/or Q-type calcium currents. P/Q-type calcium channels belong to the 'high-voltage activated' (HVA) group. The polypeptide is Voltage-dependent P/Q-type calcium channel subunit alpha-1A (CACNA1A) (Gallus gallus (Chicken)).